A 28-amino-acid polypeptide reads, in one-letter code: Conotoxin Vi14b (28 aa).

2 disulfides stabilise this stretch: Cys-4/Cys-21 and Cys-7/Cys-18. 2 positions are modified to N6-acetyllysine: Lys-15 and Lys-25.

Post-translationally, the two N6-acetyllysines at position 15 and 25 have been deduced from the mass difference of 42. They are not common in venom proteins. In terms of tissue distribution, expressed by the venom gland.

Its subcellular location is the secreted. Its function is as follows. In vitro, inhibits proliferation of the mice ovarian cancer cells ID8. The protein is Conotoxin Vi14b of Conus virgo (Virgin cone).